A 158-amino-acid polypeptide reads, in one-letter code: Transcription elongation factor GreA (158 aa).

The protein belongs to the GreA/GreB family.

Necessary for efficient RNA polymerase transcription elongation past template-encoded arresting sites. The arresting sites in DNA have the property of trapping a certain fraction of elongating RNA polymerases that pass through, resulting in locked ternary complexes. Cleavage of the nascent transcript by cleavage factors such as GreA or GreB allows the resumption of elongation from the new 3'terminus. GreA releases sequences of 2 to 3 nucleotides. The polypeptide is Transcription elongation factor GreA (Pelobacter propionicus (strain DSM 2379 / NBRC 103807 / OttBd1)).